Here is a 191-residue protein sequence, read N- to C-terminus: Ion-translocating oxidoreductase complex subunit B (191 aa).

Residues 1–26 (MSSLWIAIAAVSAIALVSGLILGFAA) are hydrophobic. The 4Fe-4S domain occupies 32–90 (EADPIVERIDALLPQSQCGQCGYPGCRPYAEAVANGEKINRCAPGGEAVMRNIAALLAV). [4Fe-4S] cluster contacts are provided by Cys49, Cys52, Cys57, Cys73, Cys116, Cys119, Cys122, Cys126, Cys146, Cys149, Cys152, and Cys156. 4Fe-4S ferredoxin-type domains lie at 107–136 (QVAL…GATR) and 137–166 (ALHT…LVPV).

Belongs to the 4Fe4S bacterial-type ferredoxin family. RnfB subfamily. As to quaternary structure, the complex is composed of six subunits: RnfA, RnfB, RnfC, RnfD, RnfE and RnfG. [4Fe-4S] cluster is required as a cofactor.

It is found in the cell inner membrane. Its function is as follows. Part of a membrane-bound complex that couples electron transfer with translocation of ions across the membrane. This is Ion-translocating oxidoreductase complex subunit B from Edwardsiella ictaluri (strain 93-146).